We begin with the raw amino-acid sequence, 286 residues long: Formyltetrahydrofolate deformylase (286 aa).

The region spanning valine 8–glutamine 88 is the ACT domain. Aspartate 230 is an active-site residue.

It belongs to the PurU family.

It catalyses the reaction (6R)-10-formyltetrahydrofolate + H2O = (6S)-5,6,7,8-tetrahydrofolate + formate + H(+). Its pathway is purine metabolism; IMP biosynthesis via de novo pathway; formate from 10-formyl-5,6,7,8-tetrahydrofolate: step 1/1. Its function is as follows. Catalyzes the hydrolysis of 10-formyltetrahydrofolate (formyl-FH4) to formate and tetrahydrofolate (FH4). The chain is Formyltetrahydrofolate deformylase from Corynebacterium sp. (strain P-1).